A 212-amino-acid polypeptide reads, in one-letter code: Large ribosomal subunit protein uL3 (212 aa).

Residues 136-155 (THGNSVSHRVLGSTGQNQTP) form a disordered region. Residue Gln-153 is modified to N5-methylglutamine.

This sequence belongs to the universal ribosomal protein uL3 family. Part of the 50S ribosomal subunit. Forms a cluster with proteins L14 and L19. Methylated by PrmB.

Its function is as follows. One of the primary rRNA binding proteins, it binds directly near the 3'-end of the 23S rRNA, where it nucleates assembly of the 50S subunit. This is Large ribosomal subunit protein uL3 from Acinetobacter baumannii (strain AB307-0294).